The primary structure comprises 285 residues: MKKNIITSITSLALVAGLSLTAFAATTATVPAPPAKQESKPAVAANPAPKNVLFQYSTINALMLGQFEGDLTLKDLKLRGDMGLGTINDLDGEMIQMGTKFYQIDSTGKLSELPESVKTPFAVTTHFEPKEKTTLTNVQDYNQLTKMLEEKFENKNVFYAVKLTGTFKMVKARTVPKQTRPYPQLTEVTKKQSEFEFKNVKGTLIGFYTPNYAAALNVPGFHLHFITEDKTSGGHVLNLQFDNANLEISPIHEFDVQLPHTDDFAHSDLTQVTTSQVHQAESERK.

A signal peptide spans 1-25; the sequence is MKKNIITSITSLALVAGLSLTAFAA.

Belongs to the alpha-acetolactate decarboxylase family.

The enzyme catalyses (2S)-2-acetolactate + H(+) = (R)-acetoin + CO2. Its pathway is polyol metabolism; (R,R)-butane-2,3-diol biosynthesis; (R,R)-butane-2,3-diol from pyruvate: step 2/3. Functionally, converts acetolactate into acetoin, which can be excreted by the cells. This may be a mechanism for controlling the internal pH of cells in the stationary stage. This chain is Alpha-acetolactate decarboxylase (aldB), found in Brevibacillus brevis (Bacillus brevis).